We begin with the raw amino-acid sequence, 286 residues long: Bifunctional protein FolD 2 (286 aa).

Residues 165 to 167 (GRG), threonine 192, and valine 233 contribute to the NADP(+) site.

Belongs to the tetrahydrofolate dehydrogenase/cyclohydrolase family. In terms of assembly, homodimer.

The enzyme catalyses (6R)-5,10-methylene-5,6,7,8-tetrahydrofolate + NADP(+) = (6R)-5,10-methenyltetrahydrofolate + NADPH. The catalysed reaction is (6R)-5,10-methenyltetrahydrofolate + H2O = (6R)-10-formyltetrahydrofolate + H(+). It functions in the pathway one-carbon metabolism; tetrahydrofolate interconversion. Its function is as follows. Catalyzes the oxidation of 5,10-methylenetetrahydrofolate to 5,10-methenyltetrahydrofolate and then the hydrolysis of 5,10-methenyltetrahydrofolate to 10-formyltetrahydrofolate. This chain is Bifunctional protein FolD 2, found in Rhodococcus jostii (strain RHA1).